We begin with the raw amino-acid sequence, 219 residues long: Casein kinase II subunit beta' (219 aa).

Thr-2 is subject to Phosphothreonine; by autocatalysis.

The protein belongs to the casein kinase 2 subunit beta family. In terms of assembly, tetramer of two alpha and two beta' subunits. Post-translationally, phosphorylated by alpha subunit.

Functionally, participates in Wnt signaling. Plays a complex role in regulating the basal catalytic activity of the alpha subunit. The chain is Casein kinase II subunit beta' (CkIIbeta2) from Drosophila melanogaster (Fruit fly).